We begin with the raw amino-acid sequence, 713 residues long: Pro-neuregulin-3, membrane-bound isoform (713 aa).

At 1–362 the chain is on the extracellular side; it reads MSEGAAGASP…MESEDVYQRQ (362 aa). Disordered stretches follow at residues 28–48, 119–220, and 251–282; these read AAAA…AAEP, SSFP…STQA, and AAAS…TTYS. Over residues 34-44 the composition is skewed to gly residues; the sequence is AGGGPDGGGEG. Low complexity predominate over residues 127 to 148; sequence TTTTTTSTTSPATPSAGGAASS. The span at 149 to 163 shows a compositional bias: polar residues; sequence RTPNRISTRLTTITR. Composition is skewed to low complexity over residues 195-207 and 254-274; these read STTA…STPG and SSSS…STSP. In terms of domain architecture, EGF-like spans 288 to 331; it reads HFKPCRDKDLAYCLNDGECFVIETLTGSHKHCRCKEGYQGVRCD. 3 disulfides stabilise this stretch: cysteine 292–cysteine 306, cysteine 300–cysteine 319, and cysteine 321–cysteine 330. Residues 363–383 traverse the membrane as a helical segment; the sequence is VLSISCIIFGIVIVGMFCAAF. Topologically, residues 384–713 are cytoplasmic; it reads YFKSKKQAKQ…EIQRDSVLTK (330 aa). Residues 449–496 form a disordered region; that stretch reads SAPQSFPEVTSPDRGSQPIKHHSPGQRSGMLHRNTFRRAPPSPRSRLG.

It belongs to the neuregulin family. Interacts with ERBB4. Post-translationally, proteolytic cleavage close to the plasma membrane on the external face leads to the release of the soluble growth factor form. Extensive glycosylation precedes the proteolytic cleavage. In terms of tissue distribution, expressed in sympathetic, motor, and sensory neurons.

It localises to the cell membrane. The protein localises to the secreted. Direct ligand for the ERBB4 tyrosine kinase receptor. Binding results in ligand-stimulated tyrosine phosphorylation and activation of the receptor. Does not bind to the EGF receptor, ERBB2 or ERBB3 receptors. This is Pro-neuregulin-3, membrane-bound isoform (Nrg3) from Mus musculus (Mouse).